Here is a 294-residue protein sequence, read N- to C-terminus: Protein RarD (294 aa).

Residues 1 to 11 (MDAKQTRQGVL) lie on the Cytoplasmic side of the membrane. The helical transmembrane segment at 12 to 34 (LALAAYFIWGIAPAYFKLIYYVP) threads the bilayer. Positions 18–145 (FIWGIAPAYF…AVCGVLVQLW (128 aa)) constitute an EamA domain. Residues 35-37 (ADE) are Periplasmic-facing. The chain crosses the membrane as a helical span at residues 38–60 (ILTHRVIWSFFFMVALLSVSRQW). Residues 61 to 72 (RQVKRLLKTPKK) are Cytoplasmic-facing. Residues 73–95 (IFLLALSAVLVGGNWLLFIWAVN) traverse the membrane as a helical segment. The Periplasmic segment spans residues 96–99 (NHHM). A helical membrane pass occupies residues 100–122 (LEASLGYFINPLVNILLGMIFLG). The Cytoplasmic portion of the chain corresponds to 123–128 (ERFRRM). Residues 129–146 (QWLAVILAVCGVLVQLWT) form a helical membrane-spanning segment. Residues 147-149 (FGS) are Periplasmic-facing. The chain crosses the membrane as a helical span at residues 150–167 (LPIIALGLAFSFAFYGLV). The Cytoplasmic segment spans residues 168 to 179 (RKKIAVEAQTGM). A helical membrane pass occupies residues 180–197 (LVETLWLLPVAAIYLFGI). Residues 198 to 211 (ADSPTSHMGQNALS) are Periplasmic-facing. The chain crosses the membrane as a helical span at residues 212–234 (LNLLLMAAGVVTTIPLLCFTGAA). The Cytoplasmic portion of the chain corresponds to 235–238 (TRLR). A helical transmembrane segment spans residues 239 to 261 (LSTLGFFQYIGPTLMFLLAVTFY). The Periplasmic segment spans residues 262–270 (GEVPGADKM). The chain crosses the membrane as a helical span at residues 271–290 (VTFAFIWVALAIFVMDAIYT). Residues 291 to 294 (QRKK) are Cytoplasmic-facing.

The protein belongs to the EamA transporter family.

It localises to the cell inner membrane. The chain is Protein RarD (rarD) from Salmonella typhimurium (strain LT2 / SGSC1412 / ATCC 700720).